A 70-amino-acid chain; its full sequence is ATP synthase subunit c (70 aa).

2 consecutive transmembrane segments (helical) span residues 4–24 (IASA…NGLI) and 47–67 (FVGV…AFMV).

Belongs to the ATPase C chain family. As to quaternary structure, F-type ATPases have 2 components, F(1) - the catalytic core - and F(0) - the membrane proton channel. F(1) has five subunits: alpha(3), beta(3), gamma(1), delta(1), epsilon(1). F(0) has three main subunits: a(1), b(2) and c(10-14). The alpha and beta chains form an alternating ring which encloses part of the gamma chain. F(1) is attached to F(0) by a central stalk formed by the gamma and epsilon chains, while a peripheral stalk is formed by the delta and b chains.

It localises to the cell membrane. Its function is as follows. F(1)F(0) ATP synthase produces ATP from ADP in the presence of a proton or sodium gradient. F-type ATPases consist of two structural domains, F(1) containing the extramembraneous catalytic core and F(0) containing the membrane proton channel, linked together by a central stalk and a peripheral stalk. During catalysis, ATP synthesis in the catalytic domain of F(1) is coupled via a rotary mechanism of the central stalk subunits to proton translocation. Key component of the F(0) channel; it plays a direct role in translocation across the membrane. A homomeric c-ring of between 10-14 subunits forms the central stalk rotor element with the F(1) delta and epsilon subunits. This is ATP synthase subunit c from Priestia megaterium (strain ATCC 12872 / QMB1551) (Bacillus megaterium).